The sequence spans 451 residues: MITPVPQHNSLEGTPLEPAISSLWSTAKRIDTRVVRGRITRAVGTLIHAVLPEARIGELCLLQDTRTGLSLEAEVIGLLDNGVLLTPIGGLAGLSSRAEVVSTGRMREVPIGPDLLGRVIDSRCRPLDGKGEVKTTEVRPLHGRAPNPMTRRMVERPFPLGVRALDGLLTCGEGQRIGIYGEPGGGKSTLISQIVKGAAADVVIVALIGERGREVREFVERHLGEEGLRRAIVVVETSDRSATERAQCAPMATALAEYFREQGLRVALLLDSLTRFCRAMREIGLAAGEPPTRRGFPPSVFAALPGLLERAGLGERGSITAFYTVLVEGDGTGDPIAEESRGILDGHIVLSRALAARSHFPAIDVLQSRSRVMDAVVSETHRKAASFFRDLLARYAECEFLINVGEYKQGGDPLTDRAVASIGELKEFLRQSEDEVSDFEETVGWMSRLTS.

Glycine 184–threonine 189 contributes to the ATP binding site.

This sequence belongs to the ATPase alpha/beta chains family. T3SS ATPase subfamily. As to quaternary structure, the core secretion machinery of the T3SS is composed of approximately 20 different proteins, including cytoplasmic components, a base, an export apparatus and a needle. This subunit is part of the cytosolic complex. Forms homohexamers.

It is found in the cytoplasm. The enzyme catalyses ATP + H2O + cellular proteinSide 1 = ADP + phosphate + cellular proteinSide 2.. Its function is as follows. ATPase component of the type III secretion system (T3SS), also called injectisome, which is used to inject bacterial effector proteins into eukaryotic host cells. Acts as a molecular motor to provide the energy that is required for the export of proteins. Required for type III secretion apparatus (T3SA) formation, proper protein secretion, host cell invasion and virulence. May play a critical role in T3SS substrate recognition, disassembly of the effector/chaperone complex and unfolding of the effector in an ATP-dependent manner prior to secretion. The chain is Type 3 secretion system ATPase from Sinorhizobium fredii (strain NBRC 101917 / NGR234).